Consider the following 346-residue polypeptide: Small ribosomal subunit biogenesis GTPase RsgA (346 aa).

A disordered region spans residues 1–26; it reads MAKRKLTQNQTRRIQSNNAKTLHRHK. Positions 7–20 are enriched in polar residues; the sequence is TQNQTRRIQSNNAK. Residues 103 to 271 enclose the CP-type G domain; the sequence is ENEISRPDYY…LIDSPGIREF (169 aa). GTP-binding positions include 159–162 and 213–221; these read NKVD and GQSGVGKSS. C295, C300, H302, and C308 together coordinate Zn(2+).

This sequence belongs to the TRAFAC class YlqF/YawG GTPase family. RsgA subfamily. In terms of assembly, monomer. Associates with 30S ribosomal subunit, binds 16S rRNA. Zn(2+) serves as cofactor.

It is found in the cytoplasm. Its function is as follows. One of several proteins that assist in the late maturation steps of the functional core of the 30S ribosomal subunit. Helps release RbfA from mature subunits. May play a role in the assembly of ribosomal proteins into the subunit. Circularly permuted GTPase that catalyzes slow GTP hydrolysis, GTPase activity is stimulated by the 30S ribosomal subunit. The protein is Small ribosomal subunit biogenesis GTPase RsgA of Haemophilus influenzae (strain PittGG).